The sequence spans 316 residues: Beta-ketoacyl-[acyl-carrier-protein] synthase III 1 (316 aa).

Active-site residues include C112 and H243. An ACP-binding region spans residues 244–248 (QANYR). Residue N273 is part of the active site.

This sequence belongs to the thiolase-like superfamily. FabH family. Homodimer.

Its subcellular location is the cytoplasm. The catalysed reaction is malonyl-[ACP] + acetyl-CoA + H(+) = 3-oxobutanoyl-[ACP] + CO2 + CoA. It functions in the pathway lipid metabolism; fatty acid biosynthesis. Its function is as follows. Catalyzes the condensation reaction of fatty acid synthesis by the addition to an acyl acceptor of two carbons from malonyl-ACP. Catalyzes the first condensation reaction which initiates fatty acid synthesis and may therefore play a role in governing the total rate of fatty acid production. Possesses both acetoacetyl-ACP synthase and acetyl transacylase activities. Its substrate specificity determines the biosynthesis of branched-chain and/or straight-chain of fatty acids. This is Beta-ketoacyl-[acyl-carrier-protein] synthase III 1 from Vibrio vulnificus (strain CMCP6).